The following is a 727-amino-acid chain: Elongation factor 2 (727 aa).

A tr-type G domain is found at 19-260 (DQIRNMGICA…MSIKHLPNPL (242 aa)). GTP is bound by residues 28 to 35 (AHIDHGKT), 94 to 98 (DTPGH), and 148 to 151 (NKVD). At His-603 the chain carries Diphthamide.

The protein belongs to the TRAFAC class translation factor GTPase superfamily. Classic translation factor GTPase family. EF-G/EF-2 subfamily.

It localises to the cytoplasm. Catalyzes the GTP-dependent ribosomal translocation step during translation elongation. During this step, the ribosome changes from the pre-translocational (PRE) to the post-translocational (POST) state as the newly formed A-site-bound peptidyl-tRNA and P-site-bound deacylated tRNA move to the P and E sites, respectively. Catalyzes the coordinated movement of the two tRNA molecules, the mRNA and conformational changes in the ribosome. The polypeptide is Elongation factor 2 (Methanococcus maripaludis (strain C5 / ATCC BAA-1333)).